The following is a 455-amino-acid chain: Inactive peptidyl-prolyl cis-trans isomerase shutdown (455 aa).

Residues 34-54 (SQQNHARDLGLDSDSDSDYED) are disordered. The segment covering 44–54 (LDSDSDSDYED) has biased composition (acidic residues). The 90-residue stretch at 103–192 (KARVSVRYSG…LFKVEVIDYS (90 aa)) folds into the PPIase FKBP-type domain. TPR repeat units follow at residues 218 to 251 (AVDL…LNYC) and 303 to 336 (CKAL…QPAN).

It belongs to the FKBP6 family. As to quaternary structure, interacts with Hsp83. In terms of tissue distribution, strongly expressed in the germline stem cells and in 16-cell cysts. Present in the germ cells throughout embryogenesis. Defects are due to derepression of transposable elements and impaired piRNA biogenesis.

Its subcellular location is the cytoplasm. The protein resides in the cytoplasmic ribonucleoprotein granule. Functionally, co-chaperone required during oogenesis to repress transposable elements and prevent their mobilization, which is essential for the germline integrity. Acts via the piRNA metabolic process, which mediates the repression of transposable elements during meiosis by forming complexes composed of piRNAs and Piwi proteins and govern the methylation and subsequent repression of transposons. Acts as a co-chaperone via its interaction with Hsp83/HSP90 and is required for the biogenesis of all three piRNA major populations. This Drosophila melanogaster (Fruit fly) protein is Inactive peptidyl-prolyl cis-trans isomerase shutdown.